Reading from the N-terminus, the 331-residue chain is Putative T-box protein 36 (331 aa).

The segment at residues 29–210 is a DNA-binding region (T-box); the sequence is EITKKQWNQL…MNRFSRKRKY (182 aa).

The protein resides in the nucleus. The protein is Putative T-box protein 36 (tbx-36) of Caenorhabditis elegans.